The sequence spans 349 residues: Protein Wnt-7b (349 aa).

Residues 1-24 (MHRNFRKWIFYVFLCFGVLYVKLG) form the signal peptide. Cystine bridges form between Cys73/Cys84, Cys123/Cys131, Cys133/Cys152, Cys200/Cys214, and Cys202/Cys209. N-linked (GlcNAc...) asparagine glycans are attached at residues Asn83 and Asn127. A lipid anchor (O-palmitoleoyl serine; by PORCN) is attached at Ser206. A disordered linker region spans residues 238 to 266 (VEVVRASRLRQPTFLRIKQLRSYQKPMET). 6 disulfides stabilise this stretch: Cys278-Cys309, Cys294-Cys304, Cys308-Cys348, Cys324-Cys339, Cys326-Cys336, and Cys331-Cys332. Residue Asn295 is glycosylated (N-linked (GlcNAc...) asparagine).

This sequence belongs to the Wnt family. In terms of assembly, forms a soluble 1:1 complex with AFM; this prevents oligomerization and is required for prolonged biological activity. The complex with AFM may represent the physiological form in body fluids. Interacts with FZD1 and FZD10. Interacts with FZD4 (in vitro). Interacts with PORCN. Interacts with glypican GPC3. Interacts (via intrinsically disordered linker region) with RECK; interaction with RECK confers ligand selectivity for Wnt7 in brain endothelial cells and allows these cells to selectively respond to Wnt7. Post-translationally, palmitoleoylation is required for efficient binding to frizzled receptors. Depalmitoleoylation leads to Wnt signaling pathway inhibition.

The protein localises to the secreted. It localises to the extracellular space. The protein resides in the extracellular matrix. Ligand for members of the frizzled family of seven transmembrane receptors that functions in the canonical Wnt/beta-catenin signaling pathway. Required for normal fusion of the chorion and the allantois during placenta development. Required for central nervous system (CNS) angiogenesis and blood-brain barrier regulation. The chain is Protein Wnt-7b (Wnt7b) from Mus musculus (Mouse).